We begin with the raw amino-acid sequence, 276 residues long: Dermonecrotic toxin Ls4SicTox-alphaIII1i (276 aa).

Residue His-3 is part of the active site. The Mg(2+) site is built by Glu-23 and Asp-25. His-38 (nucleophile) is an active-site residue. An intrachain disulfide couples Cys-42 to Cys-48. Asp-82 serves as a coordination point for Mg(2+).

This sequence belongs to the arthropod phospholipase D family. Class I subfamily. Mg(2+) serves as cofactor. As to expression, expressed by the venom gland.

It is found in the secreted. The catalysed reaction is an N-(acyl)-sphingosylphosphocholine = an N-(acyl)-sphingosyl-1,3-cyclic phosphate + choline. The enzyme catalyses an N-(acyl)-sphingosylphosphoethanolamine = an N-(acyl)-sphingosyl-1,3-cyclic phosphate + ethanolamine. It catalyses the reaction a 1-acyl-sn-glycero-3-phosphocholine = a 1-acyl-sn-glycero-2,3-cyclic phosphate + choline. It carries out the reaction a 1-acyl-sn-glycero-3-phosphoethanolamine = a 1-acyl-sn-glycero-2,3-cyclic phosphate + ethanolamine. In terms of biological role, dermonecrotic toxins cleave the phosphodiester linkage between the phosphate and headgroup of certain phospholipids (sphingolipid and lysolipid substrates), forming an alcohol (often choline) and a cyclic phosphate. This toxin acts on sphingomyelin (SM). It may also act on ceramide phosphoethanolamine (CPE), lysophosphatidylcholine (LPC) and lysophosphatidylethanolamine (LPE), but not on lysophosphatidylserine (LPS), and lysophosphatidylglycerol (LPG). It acts by transphosphatidylation, releasing exclusively cyclic phosphate products as second products. Induces dermonecrosis, hemolysis, increased vascular permeability, edema, inflammatory response, and platelet aggregation. In Loxosceles sp. (strain 4 GJB-2008) (Recluse spider), this protein is Dermonecrotic toxin Ls4SicTox-alphaIII1i.